A 410-amino-acid polypeptide reads, in one-letter code: MNPQLNNLTLPIYMDYQATTPIDPRVMEAMLPYFTTKFGNPHSRSHSFGWEAENAVEEARSMVAKLIGADTKEIIFTSGATESNNLAIKGIAKFYSNKKNHIITVVSEHKCVLDACRHLEQEGIKITYLPIKPNGIIDLETLKNAITDQTMLVSVMVVNNEIGVVQPLKEIGQICREKGVFFHSDIAQGFGKIPIDVNAFNIDLASISGHKIYGPKGIGALYVRKKPRVRVTPLINGGGQERGIRSGTLPTPLIVGLGMAAEIAYSEMEKDTKHINYLFDRFLNNIHKRISKVYLNGDKNQRYKGNLNLSFAGVEGESMILAIKDLAVSSGSACTSASLEPSYVLRSMGIGEELAHTAIRFGIGRFTTEQEVDYAVNLICSKIDKLRELSPLWEMMQEGIDLKKIKWAVH.

Pyridoxal 5'-phosphate is bound by residues 80–81 (AT), asparagine 160, glutamine 188, and 208–210 (SGH). Lysine 211 carries the N6-(pyridoxal phosphate)lysine modification. Threonine 248 serves as a coordination point for pyridoxal 5'-phosphate. The active-site Cysteine persulfide intermediate is cysteine 334. Cysteine 334 serves as a coordination point for [2Fe-2S] cluster.

This sequence belongs to the class-V pyridoxal-phosphate-dependent aminotransferase family. NifS/IscS subfamily. As to quaternary structure, homodimer. Forms a heterotetramer with IscU, interacts with other sulfur acceptors. Pyridoxal 5'-phosphate serves as cofactor.

It localises to the cytoplasm. The enzyme catalyses (sulfur carrier)-H + L-cysteine = (sulfur carrier)-SH + L-alanine. Its pathway is cofactor biosynthesis; iron-sulfur cluster biosynthesis. In terms of biological role, master enzyme that delivers sulfur to a number of partners involved in Fe-S cluster assembly, tRNA modification or cofactor biosynthesis. Catalyzes the removal of elemental sulfur atoms from cysteine to produce alanine. Functions as a sulfur delivery protein for Fe-S cluster synthesis onto IscU, an Fe-S scaffold assembly protein, as well as other S acceptor proteins. In Rickettsia africae (strain ESF-5), this protein is Cysteine desulfurase IscS.